The chain runs to 317 residues: MVRENKAAWKAQYFIKVVELFDEFPKCFIVGADNVGSKQMQNIRTSLRGLAVVLMGKNTMMRKAIRGHLENNPQLEKLLPHIKGNVGFVFTKGDLAEVRDKLLESKVRAPARPGAIAPLHVIIPAQNTGLGPEKTSFFQALSIPTKISKGTIEIINDVPILKPGDKVGASEATLLNMLNISPFSYGLIVNQVYDSGSIFSPEILDIKPEDLRAKFQQGVANLAAVCLSVGYPTIASAPHSIANGFKNLLAIAATTEVEFKEATTIKEYIKDPSKFAAAASASAAPAAGGATEKKEEAKKPESESEEEDDDMGFGLFD.

Low complexity predominate over residues 280–290 (SASAAPAAGGA). The tract at residues 280 to 317 (SASAAPAAGGATEKKEEAKKPESESEEEDDDMGFGLFD) is disordered. The segment covering 291-302 (TEKKEEAKKPES) has biased composition (basic and acidic residues). Position 302 is a phosphoserine (serine 302). Serine 304 carries the phosphoserine; by CK1 modification.

It belongs to the universal ribosomal protein uL10 family. P0 forms a pentameric complex by interaction with dimers of P1 and P2.

It localises to the cytoplasm. It is found in the nucleus. Its function is as follows. Ribosomal protein P0 is the functional equivalent of E.coli protein L10. The chain is Large ribosomal subunit protein uL10 (RpLP0) from Drosophila melanogaster (Fruit fly).